The chain runs to 216 residues: Uridine kinase (216 aa).

16-23 (GASASGKS) contacts ATP.

The protein belongs to the uridine kinase family.

The protein localises to the cytoplasm. It carries out the reaction uridine + ATP = UMP + ADP + H(+). It catalyses the reaction cytidine + ATP = CMP + ADP + H(+). It participates in pyrimidine metabolism; CTP biosynthesis via salvage pathway; CTP from cytidine: step 1/3. Its pathway is pyrimidine metabolism; UMP biosynthesis via salvage pathway; UMP from uridine: step 1/1. This chain is Uridine kinase, found in Pasteurella multocida (strain Pm70).